The following is a 314-amino-acid chain: GATA zinc finger domain-containing protein 19 (314 aa).

The protein is GATA zinc finger domain-containing protein 19 (gtaS) of Dictyostelium discoideum (Social amoeba).